We begin with the raw amino-acid sequence, 117 residues long: Large ribosomal subunit protein bL17 (117 aa).

It belongs to the bacterial ribosomal protein bL17 family. As to quaternary structure, part of the 50S ribosomal subunit. Contacts protein L32.

This Campylobacter jejuni subsp. doylei (strain ATCC BAA-1458 / RM4099 / 269.97) protein is Large ribosomal subunit protein bL17.